The primary structure comprises 148 residues: Transcriptional regulator MraZ (148 aa).

SpoVT-AbrB domains are found at residues 5–51 and 80–123; these read ATSL…PLPA and AEDV…SMEA.

It belongs to the MraZ family. Forms oligomers.

Its subcellular location is the cytoplasm. It localises to the nucleoid. The protein is Transcriptional regulator MraZ of Methylobacillus flagellatus (strain ATCC 51484 / DSM 6875 / VKM B-1610 / KT).